A 219-amino-acid polypeptide reads, in one-letter code: 7-cyano-7-deazaguanine synthase (219 aa).

An ATP-binding site is contributed by 10-20 (FSGGQDSTTCL). Residues Cys188, Cys196, Cys199, and Cys202 each coordinate Zn(2+).

Belongs to the QueC family. It depends on Zn(2+) as a cofactor.

It carries out the reaction 7-carboxy-7-deazaguanine + NH4(+) + ATP = 7-cyano-7-deazaguanine + ADP + phosphate + H2O + H(+). Its pathway is purine metabolism; 7-cyano-7-deazaguanine biosynthesis. In terms of biological role, catalyzes the ATP-dependent conversion of 7-carboxy-7-deazaguanine (CDG) to 7-cyano-7-deazaguanine (preQ(0)). The chain is 7-cyano-7-deazaguanine synthase from Neisseria meningitidis serogroup C / serotype 2a (strain ATCC 700532 / DSM 15464 / FAM18).